A 126-amino-acid polypeptide reads, in one-letter code: Protein translocase subunit SecE (126 aa).

Transmembrane regions (helical) follow at residues 18–38 (LKWVATFVLLVAAVVGNYLYG), 40–60 (LSVVARAAGVIVLIAAALGVA), and 97–117 (IVLAVSIVMALALWGIDGIMV).

This sequence belongs to the SecE/SEC61-gamma family. As to quaternary structure, component of the Sec protein translocase complex. Heterotrimer consisting of SecY, SecE and SecG subunits. The heterotrimers can form oligomers, although 1 heterotrimer is thought to be able to translocate proteins. Interacts with the ribosome. Interacts with SecDF, and other proteins may be involved. Interacts with SecA.

It is found in the cell inner membrane. Its function is as follows. Essential subunit of the Sec protein translocation channel SecYEG. Clamps together the 2 halves of SecY. May contact the channel plug during translocation. In Vibrio cholerae serotype O1 (strain ATCC 39315 / El Tor Inaba N16961), this protein is Protein translocase subunit SecE.